The following is a 520-amino-acid chain: AMP-binding domain-containing enzyme iboA (520 aa).

180 to 191 (LTSGSTSGSPKV) provides a ligand contact to ATP. The short motif at 397–447 (DGNFHTGDLFEKQLDGSYLFRGRGDDWIKSEDSRFIDTKAIEEKINDVCSD) is the FACS element.

It belongs to the ATP-dependent AMP-binding enzyme family. Mg(2+) is required as a cofactor.

Its pathway is secondary metabolite biosynthesis. AMP-binding domain-containing enzyme; part of the gene cluster that mediates the biosynthesis of the psychoactive metabolites ibotenic acid and muscimol. The first committed step is glutamate hydroxylation by the 2-oxoglutarate-dependent dioxygenase iboH, and the last step is decarboxylation of ibotenic acid to muscimol by the decarboxylase iboD. The order of the intermediate reactions is somewhat ambiguous. IboA likely activates the carboxylic acid at position 5 to introduce an amide bond, and the flavin monooxygenase iboF generates the N-O bond. There are several options for the latter step. One option is that iboF directly hydroxylates the amide nitrogen formed by iboA to produce a hydroxamic acid species. Another option is that iboF hydroxylates an external N-containing compound, whose resulting N-O bond is subsequently introduced into the hydroxyglutamate scaffold. The paralogous PLP-dependent cystathionine gamma-synthase-like enzymes iboG1 and iboG2 are likely involved in substitution of the OH group at position 3 by the O-N moiety. The first cyclic intermediate is most probably tricholomic acid which is likely desaturated to ibotenic acid by the cytochrome P450 monooxygenase iboC. The polypeptide is AMP-binding domain-containing enzyme iboA (Amanita muscaria (strain Koide BX008)).